The primary structure comprises 212 residues: Pyridoxine/pyridoxamine 5'-phosphate oxidase (212 aa).

FMN-binding positions include 59–64, 74–75, lysine 81, and glutamine 103; these read RMVLMK and YS. Lysine 64 contributes to the substrate binding site. Substrate-binding residues include tyrosine 121 and arginine 125. FMN contacts are provided by residues 138 to 139 and tryptophan 183; that span reads QS. 189-191 contributes to the substrate binding site; it reads RLH. Arginine 193 lines the FMN pocket.

Belongs to the pyridoxamine 5'-phosphate oxidase family. As to quaternary structure, homodimer. FMN serves as cofactor.

It carries out the reaction pyridoxamine 5'-phosphate + O2 + H2O = pyridoxal 5'-phosphate + H2O2 + NH4(+). The catalysed reaction is pyridoxine 5'-phosphate + O2 = pyridoxal 5'-phosphate + H2O2. Its pathway is cofactor metabolism; pyridoxal 5'-phosphate salvage; pyridoxal 5'-phosphate from pyridoxamine 5'-phosphate: step 1/1. It participates in cofactor metabolism; pyridoxal 5'-phosphate salvage; pyridoxal 5'-phosphate from pyridoxine 5'-phosphate: step 1/1. In terms of biological role, catalyzes the oxidation of either pyridoxine 5'-phosphate (PNP) or pyridoxamine 5'-phosphate (PMP) into pyridoxal 5'-phosphate (PLP). The polypeptide is Pyridoxine/pyridoxamine 5'-phosphate oxidase (Rhodopseudomonas palustris (strain BisB5)).